A 517-amino-acid chain; its full sequence is Salicyloyl-CoA 5-hydroxylase (517 aa).

The protein belongs to the aromatic-ring hydroxylase family. KMO subfamily.

The enzyme catalyses 2-hydroxybenzoyl-CoA + NADH + O2 + H(+) = 2,5-dihydroxybenzoyl-CoA + NAD(+) + H2O. Functionally, involved in the degradation of salicylate via a pathway involving coenzyme A derivative. Catalyzes the aromatic hydroxylation of salicylyl-CoA to yield gentisyl-CoA. The sequence is that of Salicyloyl-CoA 5-hydroxylase from Streptomyces sp.